We begin with the raw amino-acid sequence, 267 residues long: 5'-nucleotidase SurE (267 aa).

4 residues coordinate a divalent metal cation: D14, D15, S45, and N100.

Belongs to the SurE nucleotidase family. It depends on a divalent metal cation as a cofactor.

The protein resides in the cytoplasm. The catalysed reaction is a ribonucleoside 5'-phosphate + H2O = a ribonucleoside + phosphate. Nucleotidase that shows phosphatase activity on nucleoside 5'-monophosphates. This Methanosarcina mazei (strain ATCC BAA-159 / DSM 3647 / Goe1 / Go1 / JCM 11833 / OCM 88) (Methanosarcina frisia) protein is 5'-nucleotidase SurE.